Reading from the N-terminus, the 119-residue chain is Ribonuclease P protein component (119 aa).

Belongs to the RnpA family. As to quaternary structure, consists of a catalytic RNA component (M1 or rnpB) and a protein subunit.

It carries out the reaction Endonucleolytic cleavage of RNA, removing 5'-extranucleotides from tRNA precursor.. Functionally, RNaseP catalyzes the removal of the 5'-leader sequence from pre-tRNA to produce the mature 5'-terminus. It can also cleave other RNA substrates such as 4.5S RNA. The protein component plays an auxiliary but essential role in vivo by binding to the 5'-leader sequence and broadening the substrate specificity of the ribozyme. In Syntrophus aciditrophicus (strain SB), this protein is Ribonuclease P protein component.